The primary structure comprises 306 residues: Serine/threonine-protein phosphatase PP-X homolog 4 (306 aa).

4 residues coordinate Mn(2+): Asp-53, His-55, Asp-81, and Asn-113. His-114 serves as the catalytic Proton donor. 2 residues coordinate Mn(2+): His-163 and His-237.

Belongs to the PPP phosphatase family. PP-4 (PP-X) subfamily. Requires Mn(2+) as cofactor.

It carries out the reaction O-phospho-L-seryl-[protein] + H2O = L-seryl-[protein] + phosphate. The catalysed reaction is O-phospho-L-threonyl-[protein] + H2O = L-threonyl-[protein] + phosphate. The polypeptide is Serine/threonine-protein phosphatase PP-X homolog 4 (Ppx4) (Paramecium tetraurelia).